The chain runs to 183 residues: MDEVEFILEEAKEGMEKAITHLKKQLSNIRAGKASPSMLGSVMVEYYGSQTPLQQVANVNTPDARTLSIQPFEKSLITEIERGIMLANLGFNPMNNGESVIINVPPLTEERRKQLSKQAKAEAEDAKVGVRNDRKQAMQELKKADISEDLLKSSEDEVQELTNTYIERIDKILTVKETEIMTV.

The protein belongs to the RRF family.

Its subcellular location is the cytoplasm. Responsible for the release of ribosomes from messenger RNA at the termination of protein biosynthesis. May increase the efficiency of translation by recycling ribosomes from one round of translation to another. The protein is Ribosome-recycling factor of Christiangramia forsetii (strain DSM 17595 / CGMCC 1.15422 / KT0803) (Gramella forsetii).